Reading from the N-terminus, the 95-residue chain is Alpha-defensin 20 (95 aa).

Residues 1–19 (MKTLVLLSALVLLAFQVQA) form the signal peptide. Residues 20–58 (DPIQNTDEETNTEEQPGEEDQAVSVSFGDPEGSALHEKS) constitute a propeptide that is removed on maturation. A disordered region spans residues 22–57 (IQNTDEETNTEEQPGEEDQAVSVSFGDPEGSALHEK). Residues 25-40 (TDEETNTEEQPGEEDQ) show a composition bias toward acidic residues. Cystine bridges form between Cys-64-Cys-89, Cys-66-Cys-81, and Cys-71-Cys-88.

The protein belongs to the alpha-defensin family.

The protein localises to the secreted. May have microbicidal activities. The protein is Alpha-defensin 20 (Defa20) of Mus musculus (Mouse).